The sequence spans 887 residues: Multiple RNA-binding domain-containing protein 1 (887 aa).

The RRM 1 domain maps to 2-94 (SRIIVKGLPV…SKIEVSMAKS (93 aa)). 3 disordered regions span residues 121–143 (KLLQ…NIDD), 203–276 (KEEN…RNLA), and 297–336 (SEAE…DEEL). 2 positions are modified to phosphoserine: S220 and S264. Residues 264–276 (SDEKENEKRRNLA) show a composition bias toward basic and acidic residues. The span at 306 to 315 (SSYATEQNES) shows a compositional bias: polar residues. Residues 316–325 (LDTKKEEQPE) are compositionally biased toward basic and acidic residues. 4 RRM domains span residues 345–423 (GRLF…PGEE), 532–604 (KVIL…RGPK), 663–746 (VSIF…LSHR), and 763–840 (GKII…YAEE). Residues 864–887 (EMAALRNGGGRKKLDVDDEENEGF) are disordered.

The protein belongs to the RRM MRD1 family. Interacts with NOP1. Binds to the 35S pre-rRNA and the U3 snoRNA.

The protein localises to the nucleus. In terms of biological role, involved in pre-rRNA processing. Required for maintaining steady-state levels of 40S ribosomal subunit. Required for the initial processing of pre-rRNA at the A0 to A2 sites, leading to the processing of the 23S pre-rRNA intermediate to the 18S rRNA. This Saccharomyces cerevisiae (strain ATCC 204508 / S288c) (Baker's yeast) protein is Multiple RNA-binding domain-containing protein 1 (MRD1).